The sequence spans 984 residues: Probable serine/threonine-protein kinase ireA (984 aa).

The first 26 residues, 1–26 (MTFSKTRNKIIFLLFLIIINIFNINA), serve as a signal peptide directing secretion. Residues 27–436 (YIKDENEDDL…NDLLDSNKLK (410 aa)) lie on the Extracellular side of the membrane. 2 disordered regions span residues 70–91 (YSTS…EITK) and 137–157 (EDKS…DENK). Composition is skewed to low complexity over residues 82–91 (STSTSTEITK) and 141–150 (STSSTSTTSE). N-linked (GlcNAc...) asparagine glycosylation is present at Asn-228. The disordered stretch occupies residues 352–427 (SPPSNNNNNN…GANNNNNNNN (76 aa)). The span at 356–397 (NNNNNNNNNNNNNNNNNNNNNNNNNNNNNNNNNNKNNNNNNK) shows a compositional bias: low complexity. Asn-398 carries N-linked (GlcNAc...) asparagine glycosylation. A helical transmembrane segment spans residues 437 to 457 (NYDIYLYSSIVILITSIIVFI). The Cytoplasmic portion of the chain corresponds to 458–984 (RSKKNFNLIN…NDQYFVQYYY (527 aa)). The stretch at 467 to 533 (NVNNNNNQNN…NDLIDEFIST (67 aa)) forms a coiled coil. Low complexity predominate over residues 472–489 (NNQNNNQNSNQNNNINNK). The disordered stretch occupies residues 472-518 (NNQNNNQNSNQNNNINNKKTPKKKKKKQKNKNNKNNNDEDDENEIEN). Residues 490-503 (KTPKKKKKKQKNKN) show a composition bias toward basic residues. Positions 509–518 (DEDDENEIEN) are enriched in acidic residues. The Protein kinase domain maps to 575 to 851 (IITNKILGTG…IGECINHPFF (277 aa)). ATP is bound by residues 581–589 (LGTGSCGTI) and Lys-603. Over residues 667 to 676 (PTDSPSIQSS) the composition is skewed to polar residues. Residues 667-692 (PTDSPSIQSSNNNGNGNNGNNNNNNQ) are disordered. The segment covering 677 to 691 (NNNGNGNNGNNNNNN) has biased composition (low complexity). The Proton acceptor role is filled by Asp-722. Positions 854–984 (VHKKLSFLVA…NDQYFVQYYY (131 aa)) constitute a KEN domain.

This sequence belongs to the protein kinase superfamily. Ser/Thr protein kinase family.

Its subcellular location is the membrane. The enzyme catalyses L-seryl-[protein] + ATP = O-phospho-L-seryl-[protein] + ADP + H(+). The catalysed reaction is L-threonyl-[protein] + ATP = O-phospho-L-threonyl-[protein] + ADP + H(+). The sequence is that of Probable serine/threonine-protein kinase ireA (ireA) from Dictyostelium discoideum (Social amoeba).